Reading from the N-terminus, the 908-residue chain is Bifunctional uridylyltransferase/uridylyl-removing enzyme (908 aa).

The uridylyltransferase stretch occupies residues 1 to 360 (MFDTPAVFAR…LERIFRRRRR (360 aa)). Residues 361-718 (IKQGYKVVRG…LDPDEDRDAT (358 aa)) are uridylyl-removing. An HD domain is found at 477 to 599 (VDEHTIQTIV…VQTTKRLDLL (123 aa)). 2 ACT domains span residues 719 to 801 (RACF…LKSR) and 829 to 904 (IIEV…GAER).

This sequence belongs to the GlnD family. Requires Mg(2+) as cofactor.

It carries out the reaction [protein-PII]-L-tyrosine + UTP = [protein-PII]-uridylyl-L-tyrosine + diphosphate. The enzyme catalyses [protein-PII]-uridylyl-L-tyrosine + H2O = [protein-PII]-L-tyrosine + UMP + H(+). Uridylyltransferase (UTase) activity is inhibited by glutamine, while glutamine activates uridylyl-removing (UR) activity. Functionally, modifies, by uridylylation and deuridylylation, the PII regulatory proteins (GlnB and homologs), in response to the nitrogen status of the cell that GlnD senses through the glutamine level. Under low glutamine levels, catalyzes the conversion of the PII proteins and UTP to PII-UMP and PPi, while under higher glutamine levels, GlnD hydrolyzes PII-UMP to PII and UMP (deuridylylation). Thus, controls uridylylation state and activity of the PII proteins, and plays an important role in the regulation of nitrogen assimilation and metabolism. This Ruegeria pomeroyi (strain ATCC 700808 / DSM 15171 / DSS-3) (Silicibacter pomeroyi) protein is Bifunctional uridylyltransferase/uridylyl-removing enzyme.